Here is a 305-residue protein sequence, read N- to C-terminus: Serine/threonine-protein phosphatase 4 catalytic subunit (305 aa).

Mn(2+)-binding residues include Asp-52, His-54, Asp-80, and Asn-112. The Proton donor role is filled by His-113. His-162 and His-236 together coordinate Mn(2+).

It belongs to the PPP phosphatase family. PP-4 (PP-X) subfamily. In terms of assembly, serine/threonine-protein phosphatase 4 (PP4) occurs in different assemblies of the catalytic and one or more regulatory subunits. Probably part of a PP4 complex containing ppp4c and ppp4r2. Interacts with smkA. Requires Mn(2+) as cofactor.

It localises to the cytoplasm. The protein resides in the nucleus. The catalysed reaction is O-phospho-L-seryl-[protein] + H2O = L-seryl-[protein] + phosphate. It carries out the reaction O-phospho-L-threonyl-[protein] + H2O = L-threonyl-[protein] + phosphate. In terms of biological role, required for development, chemotaxis and the expression of numerous genes. This chain is Serine/threonine-protein phosphatase 4 catalytic subunit (ppp4c), found in Dictyostelium discoideum (Social amoeba).